A 1770-amino-acid chain; its full sequence is Transposon Ty2-LR1 Gag-Pol polyprotein (1770 aa).

Polar residues-rich tracts occupy residues 1 to 11 (MESQQLHQNPH), 19 to 39 (ASVT…SASN), and 49 to 60 (KVNSQQETTPGT). Disordered stretches follow at residues 1–86 (MESQ…GQYQ) and 359–453 (QHSE…LPDH). Residues 295 to 397 (ENNINVSDRL…SSKPRAAKAH (103 aa)) are RNA-binding. The span at 369 to 381 (TSPNTTNTKVTTR) shows a compositional bias: low complexity. 2 stretches are compositionally biased toward polar residues: residues 399-408 (IATSSKFSRV) and 415-435 (ESTV…GQQQ). D457 serves as the catalytic For protease activity; shared with dimeric partner. An integrase-type zinc finger-like region spans residues 579–636 (NVNKSKSVNKYPYPLIHRMLGHANFRSIQKSLKKNAVTYLKESDIEWSNASTYQCPDC). One can recognise an Integrase catalytic domain in the interval 656–831 (ESYEPFQYLH…AGLDITTILP (176 aa)). Mg(2+) contacts are provided by D667 and D732. Disordered regions lie at residues 1005–1038 (GGTI…MIDL), 1058–1135 (GTEE…KSSK), 1146–1165 (LPLP…VSKD), and 1170–1205 (HSRQ…TEIE). 2 stretches are compositionally biased toward polar residues: residues 1009–1024 (ESDT…FTAR) and 1065–1082 (QRNS…STPS). The span at 1151–1165 (LTHKSPTDTSDVSKD) shows a compositional bias: basic and acidic residues. Positions 1193–1227 (KKRSLEDNETEIEVSRDTWNNKNMRSLEPPRSKKR) match the Bipartite nuclear localization signal motif. A Reverse transcriptase Ty1/copia-type domain is found at 1353 to 1491 (NDYYITQLDI…DILGLEIKYQ (139 aa)). Mg(2+)-binding residues include D1361, D1442, D1443, D1625, E1667, and D1700. Residues 1625–1767 (DASYGNQPYY…IKTFKLLTNK (143 aa)) form the RNase H Ty1/copia-type domain.

As to quaternary structure, the capsid protein forms a homotrimer, from which the VLPs are assembled. The protease is a homodimer, whose active site consists of two apposed aspartic acid residues. In terms of processing, initially, virus-like particles (VLPs) are composed of the structural unprocessed proteins Gag and Gag-Pol, and also contain the host initiator methionine tRNA (tRNA(i)-Met) which serves as a primer for minus-strand DNA synthesis, and a dimer of genomic Ty RNA. Processing of the polyproteins occurs within the particle and proceeds by an ordered pathway, called maturation. First, the protease (PR) is released by autocatalytic cleavage of the Gag-Pol polyprotein, and this cleavage is a prerequisite for subsequent processing at the remaining sites to release the mature structural and catalytic proteins. Maturation takes place prior to the RT reaction and is required to produce transposition-competent VLPs.

Its subcellular location is the cytoplasm. The protein localises to the nucleus. It catalyses the reaction DNA(n) + a 2'-deoxyribonucleoside 5'-triphosphate = DNA(n+1) + diphosphate. The catalysed reaction is Endonucleolytic cleavage to 5'-phosphomonoester.. In terms of biological role, capsid protein (CA) is the structural component of the virus-like particle (VLP), forming the shell that encapsulates the retrotransposons dimeric RNA genome. The particles are assembled from trimer-clustered units and there are holes in the capsid shells that allow for the diffusion of macromolecules. CA also has nucleocapsid-like chaperone activity, promoting primer tRNA(i)-Met annealing to the multipartite primer-binding site (PBS), dimerization of Ty2 RNA and initiation of reverse transcription. Its function is as follows. The aspartyl protease (PR) mediates the proteolytic cleavages of the Gag and Gag-Pol polyproteins after assembly of the VLP. Functionally, reverse transcriptase/ribonuclease H (RT) is a multifunctional enzyme that catalyzes the conversion of the retro-elements RNA genome into dsDNA within the VLP. The enzyme displays a DNA polymerase activity that can copy either DNA or RNA templates, and a ribonuclease H (RNase H) activity that cleaves the RNA strand of RNA-DNA heteroduplexes during plus-strand synthesis and hydrolyzes RNA primers. The conversion leads to a linear dsDNA copy of the retrotransposon that includes long terminal repeats (LTRs) at both ends. Integrase (IN) targets the VLP to the nucleus, where a subparticle preintegration complex (PIC) containing at least integrase and the newly synthesized dsDNA copy of the retrotransposon must transit the nuclear membrane. Once in the nucleus, integrase performs the integration of the dsDNA into the host genome. This Saccharomyces cerevisiae (strain ATCC 204508 / S288c) (Baker's yeast) protein is Transposon Ty2-LR1 Gag-Pol polyprotein (TY2B-LR1).